A 204-amino-acid polypeptide reads, in one-letter code: Putative AgrB-like protein (204 aa).

5 helical membrane passes run 51–73 (VYGIALVTGLLLQTVTVHLSYLW), 87–107 (LNCTLISLTMFVLAPFIFQNI), 111–131 (NWIVLGTFAFILLNMFLFAPA), 151–168 (AMIGTLILTGIALLIPFA), and 173–190 (LIMVGSLFQVISINPLTY).

The protein belongs to the AgrB family.

It is found in the cell membrane. Functionally, may be involved in the proteolytic processing of a quorum sensing system signal molecule precursor. The protein is Putative AgrB-like protein of Listeria innocua serovar 6a (strain ATCC BAA-680 / CLIP 11262).